The following is a 102-amino-acid chain: Large ribosomal subunit protein mL63 (102 aa).

The protein belongs to the mitochondrion-specific ribosomal protein mL63 family.

Its subcellular location is the mitochondrion. In Bos taurus (Bovine), this protein is Large ribosomal subunit protein mL63 (MRPL57).